Consider the following 694-residue polypeptide: MSSQWDEDSDADILELANKPPRGTQLTQIESHAETETCGNDESGTGARTHEDLDKLQMDLMTARGESGMLRDRLMMLQQEKDRERERLLGREQELQGRHLQELQKLQEELQRLEDEKQFLVLEKRQLVKGHIAAGLPAQDIQDDSTEVSAKRRKTEDSLVQTYVTLNHTRVVTGDSSLFLDHMVLFKLHGSDMTVLDMLDHISLESPASCSMLVIPSGEPLGKPIHMMLLRLKSMHPLDKMIDIVLENLAMLIKKIMQGKDCRFAVPFLVAYMHQALSFRPSAVHVHALKDLFQFSSDLAIKFQPLLKSPLHASPLELGVEPNIFQYELLDTLSLFYCFDVMELCVKYLLQCSPESQKSFFDEIIWKNITKVMQLSLTISYKSILNVVFSMVEILRALSELITPEELSTVQWWDSAISKLFQLWNRQVSNANLHDNDNLHVLPKHNFPGLNRCLGDSTNVHLIEELIDTKAVQAIPEVIYRDFPPFSRECKIRIEGWGLQLHKATVNILQQLLLRYGKQLAHAELLHQTAKFLCREQELLLVVRLTADSHNSDMRITLAEELIRLLYHAWQEHEEPSKAITEVQNELIACLWRVVFGHMSNRDPQTQPELDALLLDSFHGLSLKEQHDLYDDVFDQPAAQAFLARELAAENVLRCETQFSGCHAYTCREMAKSVLESIISLEDTDSLFLAMVSE.

Residues Met-1 to Ile-13 show a composition bias toward acidic residues. The interval Met-1–Leu-26 is disordered. Residues Gly-68–Gly-130 are a coiled coil.

In terms of assembly, forms a complex with MEC1.

It localises to the cytoplasm. Its subcellular location is the nucleus. Forms a complex with the serine/threonine kinase MEC1 which activates checkpoint signaling upon genotoxic stresses. The MEC1-LCD1 complex is recruited to DNA lesions in order to initiates the DNA repair by homologous recombination. Required for cell growth and meiotic recombination. The polypeptide is DNA damage checkpoint protein LCD1 (LCD1) (Eremothecium gossypii (strain ATCC 10895 / CBS 109.51 / FGSC 9923 / NRRL Y-1056) (Yeast)).